The primary structure comprises 221 residues: Riboflavin kinase (221 aa).

The segment at 1–89 (MENIYIALKT…ISSILRFSQE (89 aa)) is H-T-H motif-like. Positions 90 to 221 (LKLVGAVQDG…EVLASIDGKL (132 aa)) are riboflavin kinase. Position 99–104 (99–104 (GLGEGK)) interacts with CDP. Mg(2+) is bound by residues Thr-128 and Asn-130. Residues Ser-185 and Glu-192 each contribute to the FMN site. 197 to 200 (KYLR) is a binding site for CDP.

The protein belongs to the archaeal riboflavin kinase family. Mg(2+) is required as a cofactor.

The catalysed reaction is riboflavin + CTP = CDP + FMN + H(+). The protein operates within cofactor biosynthesis; FMN biosynthesis; FMN from riboflavin (CTP route): step 1/1. In terms of biological role, catalyzes the CTP-dependent phosphorylation of riboflavin (vitamin B2) to form flavin mononucleotide (FMN). The sequence is that of Riboflavin kinase (ribK) from Picrophilus torridus (strain ATCC 700027 / DSM 9790 / JCM 10055 / NBRC 100828 / KAW 2/3).